The sequence spans 758 residues: Dolichyl-phosphooligosaccharide-protein glycotransferase 2 (758 aa).

The Cytoplasmic segment spans residues 1 to 6 (MKRRYS). Residues 7 to 27 (ILIILLVAIFYRMITFRFKYL) traverse the membrane as a helical segment. The Extracellular portion of the chain corresponds to 28–92 (LGYDPYFHLA…KVFGVSLTTT (65 aa)). The DXD motif 1 motif lies at 29–31 (GYD). Asp31 is a binding site for Mn(2+). Residues 93-113 (FKITPVIFGVLTVIFLYLSLL) traverse the membrane as a helical segment. Over 114 to 120 (KLYDEKR) the chain is Cytoplasmic. A helical transmembrane segment spans residues 121 to 141 (AFFGGFFLAISYGHVFRSMAN). At 142 to 145 (YYRG) the chain is on the extracellular side. Mn(2+) contacts are provided by Arg144 and Asp146. A DXD motif 2 motif is present at residues 144-146 (RGD). Residues 146 to 166 (DNYMLFWYSVALLGISLALGI) traverse the membrane as a helical segment. The Cytoplasmic portion of the chain corresponds to 167–175 (KKGKWKYKR). The next 2 helical transmembrane spans lie at 176–196 (LIFYTLPVLASGFSAIFWQAY) and 197–217 (YPIFAFLLSNALLLAVGAFIL). The Cytoplasmic segment spans residues 218–226 (KKDKYLLDS). The helical transmembrane segment at 227 to 247 (IILILSTAFGVLLANYLGGIF) threads the bilayer. At 248-281 (GYGMLGYAKWLGKSVAKKLGLEFGYLKDVYLILH) the chain is on the extracellular side. A helical transmembrane segment spans residues 282–302 (LKYLVPISLSFVLVLILLGFL). Residues 303–310 (TKDIRIRS) lie on the Cytoplasmic side of the membrane. A helical membrane pass occupies residues 311-331 (LFLGIASFIGIIILFKRFEAL). At 332-352 (KELSTGFGIFKEAPILETQPT) the chain is on the extracellular side. Positions 340–343 (IFKE) match the TIXE motif motif. The chain crosses the membrane as a helical span at residues 353 to 373 (SFKDLWAAFSLSFFLTPLFFI). Over 374-379 (RFKKPR) the chain is Cytoplasmic. A helical transmembrane segment spans residues 380-400 (VEDFLTLGLIIPSVYMLKTWT). Arg401 is a topological domain (extracellular). Arg401 serves as a coordination point for a glycophospholipid. The helical transmembrane segment at 402–422 (FLFIGSMAIAIMSGIGIVELY) threads the bilayer. Over 423-433 (EAIKPRLNGKK) the chain is Cytoplasmic. A helical transmembrane segment spans residues 434 to 454 (ALATGIITLVILPGVIAGLSF). The Extracellular portion of the chain corresponds to 455 to 758 (KEVCSLHPEM…DRGVFRLSYN (304 aa)). The interacts with target acceptor peptide in protein substrate stretch occupies residues 488-490 (WWD). The WWDYG motif motif lies at 488-492 (WWDWG). The short motif at 540–547 (DFLKFGAI) is the DK motif element.

The protein belongs to the STT3 family. Mn(2+) is required as a cofactor. The cofactor is Mg(2+).

It is found in the cell membrane. It catalyses the reaction an archaeal dolichyl phosphooligosaccharide + [protein]-L-asparagine = an archaeal dolichyl phosphate + a glycoprotein with the oligosaccharide chain attached by N-beta-D-glycosyl linkage to a protein L-asparagine.. The protein operates within protein modification; protein glycosylation. Its function is as follows. Oligosaccharyl transferase (OST) that catalyzes the initial transfer of a defined glycan (ManNAcXyl(2)GlcAMan(2)GalNAc in Pyrococcus) from the lipid carrier dolichol-monophosphate to an asparagine residue within an Asn-X-Ser/Thr consensus motif in nascent polypeptide chains, the first step in protein N-glycosylation. The chain is Dolichyl-phosphooligosaccharide-protein glycotransferase 2 (aglB2) from Pyrococcus horikoshii (strain ATCC 700860 / DSM 12428 / JCM 9974 / NBRC 100139 / OT-3).